A 449-amino-acid polypeptide reads, in one-letter code: Phosphoglucosamine mutase (449 aa).

The active-site Phosphoserine intermediate is the Ser-104. Ser-104, Asp-243, Asp-245, and Asp-247 together coordinate Mg(2+). The residue at position 104 (Ser-104) is a Phosphoserine.

It belongs to the phosphohexose mutase family. It depends on Mg(2+) as a cofactor. Activated by phosphorylation.

It catalyses the reaction alpha-D-glucosamine 1-phosphate = D-glucosamine 6-phosphate. Functionally, catalyzes the conversion of glucosamine-6-phosphate to glucosamine-1-phosphate. In Xanthomonas oryzae pv. oryzae (strain PXO99A), this protein is Phosphoglucosamine mutase.